The following is a 126-amino-acid chain: Histone H2B type 1-H (126 aa).

The segment covering 1-12 has biased composition (low complexity); the sequence is MPDPAKSAPAPK. A disordered region spans residues 1–36; sequence MPDPAKSAPAPKKGSKKAVTKAQKKDGKKRKRSRKE. At Pro2 the chain carries N-acetylproline. Lys6 is modified (N6-(2-hydroxyisobutyryl)lysine; alternate). An N6-(beta-hydroxybutyryl)lysine; alternate modification is found at Lys6. N6-acetyllysine; alternate is present on Lys6. Position 6 is an N6-butyryllysine; alternate (Lys6). Position 6 is an N6-crotonyllysine; alternate (Lys6). Residue Lys6 is modified to N6-lactoyllysine; alternate. Lys6 participates in a covalent cross-link: Glycyl lysine isopeptide (Lys-Gly) (interchain with G-Cter in SUMO2); alternate. The residue at position 7 (Ser7) is an ADP-ribosylserine. The residue at position 12 (Lys12) is an N6-(beta-hydroxybutyryl)lysine; alternate. N6-acetyllysine; alternate occurs at positions 12 and 13. 2 positions are modified to N6-crotonyllysine; alternate: Lys12 and Lys13. An N6-lactoyllysine; alternate modification is found at Lys12. At Lys13 the chain carries N6-(2-hydroxyisobutyryl)lysine; alternate. Ser15 bears the Phosphoserine; by STK4/MST1 mark. N6-acetyllysine; alternate occurs at positions 16, 17, 21, and 24. N6-crotonyllysine; alternate occurs at positions 16, 17, 21, and 24. N6-lactoyllysine; alternate occurs at positions 16, 17, 21, and 24. N6-(beta-hydroxybutyryl)lysine; alternate occurs at positions 17 and 21. Lys17 bears the N6-glutaryllysine; alternate mark. Lys21 and Lys24 each carry N6-(2-hydroxyisobutyryl)lysine; alternate. Position 21 is an N6-butyryllysine; alternate (Lys21). A Glycyl lysine isopeptide (Lys-Gly) (interchain with G-Cter in SUMO2); alternate cross-link involves residue Lys21. Position 25 is an N6-(2-hydroxyisobutyryl)lysine (Lys25). Lys35 carries the post-translational modification N6-(2-hydroxyisobutyryl)lysine; alternate. At Lys35 the chain carries N6-(beta-hydroxybutyryl)lysine; alternate. An N6-crotonyllysine; alternate modification is found at Lys35. Lys35 bears the N6-glutaryllysine; alternate mark. The residue at position 35 (Lys35) is an N6-succinyllysine; alternate. A Glycyl lysine isopeptide (Lys-Gly) (interchain with G-Cter in ubiquitin); alternate cross-link involves residue Lys35. Glu36 bears the PolyADP-ribosyl glutamic acid mark. A Phosphoserine; by AMPK modification is found at Ser37. 3 positions are modified to N6-(2-hydroxyisobutyryl)lysine; alternate: Lys44, Lys47, and Lys58. At Lys44 the chain carries N6-lactoyllysine; alternate. N6-glutaryllysine; alternate occurs at positions 44 and 47. At Lys47 the chain carries N6-methyllysine; alternate. Lys58 carries the N6,N6-dimethyllysine; alternate modification. Residue Arg80 is modified to Dimethylated arginine. N6-(2-hydroxyisobutyryl)lysine; alternate is present on Lys86. Lys86 is modified (N6-(beta-hydroxybutyryl)lysine; alternate). Lys86 carries the N6-acetyllysine; alternate modification. N6-lactoyllysine; alternate is present on Lys86. Residue Lys86 is modified to N6,N6,N6-trimethyllysine; alternate. 2 positions are modified to omega-N-methylarginine: Arg87 and Arg93. Position 109 is an N6-(2-hydroxyisobutyryl)lysine; alternate (Lys109). Lys109 carries the N6-lactoyllysine; alternate modification. An N6-glutaryllysine; alternate modification is found at Lys109. Lys109 carries the N6-methyllysine; alternate modification. A glycan (O-linked (GlcNAc) serine) is linked at Ser113. Thr116 is modified (phosphothreonine). 2 positions are modified to N6-(2-hydroxyisobutyryl)lysine; alternate: Lys117 and Lys121. Residues Lys117 and Lys121 each carry the N6-(beta-hydroxybutyryl)lysine; alternate modification. An N6-lactoyllysine; alternate mark is found at Lys117 and Lys121. N6-glutaryllysine; alternate is present on residues Lys117 and Lys121. N6-succinyllysine; alternate is present on residues Lys117 and Lys121. The residue at position 117 (Lys117) is an N6-malonyllysine; alternate. Lys117 carries the N6-methylated lysine; alternate modification. Lys121 is covalently cross-linked (Glycyl lysine isopeptide (Lys-Gly) (interchain with G-Cter in ubiquitin); alternate).

Belongs to the histone H2B family. The nucleosome is a histone octamer containing two molecules each of H2A, H2B, H3 and H4 assembled in one H3-H4 heterotetramer and two H2A-H2B heterodimers. The octamer wraps approximately 147 bp of DNA. Found in a complex with PPAR9; DTX3L AND STAT1; the interaction is likely to induce DTX3L-mediated ubiquitination of H2BC9/H2BJ. Post-translationally, monoubiquitination at Lys-35 (H2BK34Ub) by the MSL1/MSL2 dimer is required for histone H3 'Lys-4' (H3K4me) and 'Lys-79' (H3K79me) methylation and transcription activation at specific gene loci, such as HOXA9 and MEIS1 loci. Similarly, monoubiquitination at Lys-121 (H2BK120Ub) by the RNF20/40 complex gives a specific tag for epigenetic transcriptional activation and is also prerequisite for histone H3 'Lys-4' and 'Lys-79' methylation. It also functions cooperatively with the FACT dimer to stimulate elongation by RNA polymerase II. H2BK120Ub also acts as a regulator of mRNA splicing: deubiquitination by USP49 is required for efficient cotranscriptional splicing of a large set of exons. Monoubiquitinated by DTX3L upon encephalomyocarditis virus (EMCV)-mediated infection. Phosphorylation at Ser-37 (H2BS36ph) by AMPK in response to stress promotes transcription. Phosphorylated on Ser-15 (H2BS14ph) by STK4/MST1 during apoptosis; which facilitates apoptotic chromatin condensation. Also phosphorylated on Ser-15 in response to DNA double strand breaks (DSBs), and in correlation with somatic hypermutation and immunoglobulin class-switch recombination. In terms of processing, glcNAcylation at Ser-113 promotes monoubiquitination of Lys-121. It fluctuates in response to extracellular glucose, and associates with transcribed genes. Post-translationally, ADP-ribosylated by PARP1 or PARP2 on Ser-7 (H2BS6ADPr) in response to DNA damage. H2BS6ADPr promotes recruitment of CHD1L. Poly ADP-ribosylation on Glu-36 (H2BE35ADPr) by PARP1 regulates adipogenesis: it inhibits phosphorylation at Ser-37 (H2BS36ph), thereby blocking expression of pro-adipogenetic genes. Crotonylation (Kcr) is specifically present in male germ cells and marks testis-specific genes in post-meiotic cells, including X-linked genes that escape sex chromosome inactivation in haploid cells. Crotonylation marks active promoters and enhancers and confers resistance to transcriptional repressors. It is also associated with post-meiotically activated genes on autosomes. In terms of processing, lactylated in macrophages by EP300/P300 by using lactoyl-CoA directly derived from endogenous or exogenous lactate, leading to stimulates gene transcription.

The protein resides in the nucleus. The protein localises to the chromosome. In terms of biological role, core component of nucleosome. Nucleosomes wrap and compact DNA into chromatin, limiting DNA accessibility to the cellular machineries which require DNA as a template. Histones thereby play a central role in transcription regulation, DNA repair, DNA replication and chromosomal stability. DNA accessibility is regulated via a complex set of post-translational modifications of histones, also called histone code, and nucleosome remodeling. The polypeptide is Histone H2B type 1-H (Homo sapiens (Human)).